The primary structure comprises 552 residues: NADH-ubiquinone oxidoreductase chain 5 (552 aa).

A run of 15 helical transmembrane segments spans residues 11 to 31 (PVTI…PFGL), 36 to 56 (LAMT…AYAI), 68 to 88 (FYII…SDNY), 89 to 109 (LMMF…ISFW), 121 to 141 (SAIL…GLMI), 152 to 172 (IALV…LLLL), 196 to 216 (TPVS…YVLV), 229 to 249 (LLII…IAIV), 256 to 274 (VIAL…AIGI), 287 to 307 (HAFF…SFVA), 322 to 342 (LPFS…IPGL), 365 to 386 (ILYY…RVLY), 406 to 426 (SLGM…IGYS), 453 to 473 (AYIK…LVYV), and 532 to 552 (SRAV…LFFI).

The protein belongs to the complex I subunit 5 family.

Its subcellular location is the mitochondrion inner membrane. The enzyme catalyses a ubiquinone + NADH + 5 H(+)(in) = a ubiquinol + NAD(+) + 4 H(+)(out). Its function is as follows. Core subunit of the mitochondrial membrane respiratory chain NADH dehydrogenase (Complex I) that is believed to belong to the minimal assembly required for catalysis. Complex I functions in the transfer of electrons from NADH to the respiratory chain. The immediate electron acceptor for the enzyme is believed to be ubiquinone. The protein is NADH-ubiquinone oxidoreductase chain 5 (NAD5) of Candida albicans (strain SC5314 / ATCC MYA-2876) (Yeast).